Here is a 348-residue protein sequence, read N- to C-terminus: Protein RecA (348 aa).

64-71 serves as a coordination point for ATP; it reads GPESSGKT. Residues 325-335 show a composition bias toward basic and acidic residues; it reads YEIDGSSKEPL. The disordered stretch occupies residues 325-348; sequence YEIDGSSKEPLDEKEETLSLLDDE.

This sequence belongs to the RecA family.

The protein resides in the cytoplasm. In terms of biological role, can catalyze the hydrolysis of ATP in the presence of single-stranded DNA, the ATP-dependent uptake of single-stranded DNA by duplex DNA, and the ATP-dependent hybridization of homologous single-stranded DNAs. It interacts with LexA causing its activation and leading to its autocatalytic cleavage. The polypeptide is Protein RecA (Listeria monocytogenes serotype 1/2a (strain 10403S)).